The primary structure comprises 406 residues: 4-O-methyl-glucuronoyl methylesterase (406 aa).

The N-terminal stretch at 1–17 is a signal peptide; that stretch reads MAFRWLSFLLLALPVLA. Cysteine 31 and cysteine 64 form a disulfide bridge. 4 N-linked (GlcNAc...) asparagine glycosylation sites follow: asparagine 100, asparagine 110, asparagine 122, and asparagine 178. Positions 215-220 match the GXSYXG catalytic site motif motif; sequence GCSRDG. Cystine bridges form between cysteine 216/cysteine 352 and cysteine 248/cysteine 324. Serine 217 (nucleophile) is an active-site residue. Positions 221, 263, and 271 each coordinate substrate. Residue asparagine 285 is glycosylated (N-linked (GlcNAc...) asparagine). Position 315 (tryptophan 315) interacts with substrate. The N-linked (GlcNAc...) asparagine glycan is linked to asparagine 348. Histidine 351 (proton donor/acceptor) is an active-site residue. Residues asparagine 376, asparagine 387, and asparagine 398 are each glycosylated (N-linked (GlcNAc...) asparagine).

It belongs to the carbohydrate esterase 15 (CE15) family.

It localises to the secreted. It catalyses the reaction a 4-O-methyl-alpha-D-glucuronosyl ester derivative + H2O = 4-O-methyl-alpha-D-glucuronate derivative + an alcohol + H(+). Its function is as follows. Glucuronoyl esterase which may play a significant role in biomass degradation, as it is considered to disconnect hemicellulose from lignin through the hydrolysis of the ester bond between 4-O-methyl-D-glucuronic acid residues of glucuronoxylans and aromatic alcohols of lignin. This is 4-O-methyl-glucuronoyl methylesterase from Phanerochaete carnosa (strain HHB-10118-sp) (White-rot fungus).